The chain runs to 196 residues: Ribosome maturation factor RimP (196 aa).

The interval L164–E196 is disordered. A compositionally biased stretch (basic residues) spans G173 to K182.

The protein belongs to the RimP family.

It localises to the cytoplasm. Required for maturation of 30S ribosomal subunits. The chain is Ribosome maturation factor RimP from Xanthomonas campestris pv. campestris (strain B100).